We begin with the raw amino-acid sequence, 240 residues long: L-isoleucine-4-hydroxylase (240 aa).

Histidine 159, aspartate 161, and histidine 212 together coordinate Fe cation.

Belongs to the iron/ascorbate-dependent oxidoreductase family. Requires L-ascorbate as cofactor. Fe(2+) is required as a cofactor.

It catalyses the reaction L-isoleucine + 2-oxoglutarate + O2 = (4S)-4-hydroxy-L-isoleucine + succinate + CO2. Functionally, catalyzes the hydroxylation of L-isoleucine to produce (4S)-4-hydroxy-L-isoleucine. Can also catalyze the hydroxylation of L-leucine, L-norvaline, L-norleucine and L-allo-isoleucine, as well as the sulfoxidation of L-methionine, L-ethionine, S-methyl-L-cysteine, S-ethyl-L-cysteine, and S-allyl-L-cysteine. The chain is L-isoleucine-4-hydroxylase from Bacillus thuringiensis.